Reading from the N-terminus, the 214-residue chain is Putative 3-methyladenine DNA glycosylase (214 aa).

It belongs to the DNA glycosylase MPG family.

The sequence is that of Putative 3-methyladenine DNA glycosylase from Mycobacterium leprae (strain Br4923).